A 305-amino-acid chain; its full sequence is Glycine--tRNA ligase alpha subunit (305 aa).

The protein belongs to the class-II aminoacyl-tRNA synthetase family. In terms of assembly, tetramer of two alpha and two beta subunits.

The protein resides in the cytoplasm. The enzyme catalyses tRNA(Gly) + glycine + ATP = glycyl-tRNA(Gly) + AMP + diphosphate. In Vibrio vulnificus (strain CMCP6), this protein is Glycine--tRNA ligase alpha subunit.